The primary structure comprises 557 residues: Aerobic glycerol-3-phosphate dehydrogenase (557 aa).

FAD is bound at residue 21-49; that stretch reads DLVIIGGGITGAGIALDASERGMKVALVE.

This sequence belongs to the FAD-dependent glycerol-3-phosphate dehydrogenase family. Requires FAD as cofactor.

It is found in the cytoplasm. The catalysed reaction is a quinone + sn-glycerol 3-phosphate = dihydroxyacetone phosphate + a quinol. The protein operates within polyol metabolism; glycerol degradation via glycerol kinase pathway; glycerone phosphate from sn-glycerol 3-phosphate (aerobic route): step 1/1. This Staphylococcus aureus (strain USA300) protein is Aerobic glycerol-3-phosphate dehydrogenase (glpD).